Reading from the N-terminus, the 525-residue chain is MTENIHKHRILILDFGSQYTQLVARRVRELGVYCELWAWDVTEAQIRDFNPSGIILSGGPESTTEENSPRAPQYVFEAGVPVFGVCYGMQTMAMQLGGHVEASNEREFGYAQVEVVNDSALVRGIEDALTADGKPLLDVWMSHGDKVTAIPSDFITVASTESCPFAIMANEEKRFYGVQFHPEVTHTRQGMRMLERFVRDICQCEALWTPAKIIDDAVARIREQVGDDKVILGLSGGVDSSVTAMLLHRAIGKNLTCVFVDNGLLRLNEAEQVLDMFGDHFGLNIVHVPAEDRFLSALAGENDPEAKRKIIGRVFVEVFDEEALKLEDVKWLAQGTIYPDVIESAASATGKAHVIKSHHNVGGLPKEMKMGLVEPLKELFKDEVRKIGLELGLPYDMLYRHPFPGPGLGVRVLGEVKKEYCDLLRRVDAIFIEELRKADLYDKVSQAFTVFLPVRSVGVMGDGRKYDWVVSLRAVETIDFMTAHWAHLPYDFLGRVSNRIINEVNGISRVVYDISGKPPATIEWE.

The 199-residue stretch at 9–207 folds into the Glutamine amidotransferase type-1 domain; sequence RILILDFGSQ…VRDICQCEAL (199 aa). Cys-86 acts as the Nucleophile in catalysis. Residues His-181 and Glu-183 contribute to the active site. The GMPS ATP-PPase domain maps to 208–400; it reads WTPAKIIDDA…LGLPYDMLYR (193 aa). 235–241 is a binding site for ATP; it reads SGGVDSS.

As to quaternary structure, homodimer.

The enzyme catalyses XMP + L-glutamine + ATP + H2O = GMP + L-glutamate + AMP + diphosphate + 2 H(+). Its pathway is purine metabolism; GMP biosynthesis; GMP from XMP (L-Gln route): step 1/1. Its function is as follows. Catalyzes the synthesis of GMP from XMP. The polypeptide is GMP synthase [glutamine-hydrolyzing] (Shigella dysenteriae serotype 1 (strain Sd197)).